Consider the following 355-residue polypeptide: uncharacterized protein (355 aa).

The first 22 residues, 1 to 22 (MRLTHVTACICLLVAVAVLFSG), serve as a signal peptide directing secretion.

The protein belongs to the bacterial solute-binding protein 1 family. WtpA subfamily.

This is an uncharacterized protein from Methanoculleus marisnigri (strain ATCC 35101 / DSM 1498 / JR1).